Consider the following 132-residue polypeptide: Small ribosomal subunit protein uS8 (132 aa).

It belongs to the universal ribosomal protein uS8 family. Part of the 30S ribosomal subunit. Contacts proteins S5 and S12.

Its function is as follows. One of the primary rRNA binding proteins, it binds directly to 16S rRNA central domain where it helps coordinate assembly of the platform of the 30S subunit. This chain is Small ribosomal subunit protein uS8, found in Shouchella clausii (strain KSM-K16) (Alkalihalobacillus clausii).